We begin with the raw amino-acid sequence, 285 residues long: Cytochrome P450 monooxygenase eupD (285 aa).

The signal sequence occupies residues 1 to 19; that stretch reads MSIAGLVTTLPWLMNMLRA. C229 serves as a coordination point for heme.

It belongs to the cytochrome P450 family. Heme is required as a cofactor.

It functions in the pathway secondary metabolite biosynthesis; terpenoid biosynthesis. Cytochrome P450 monooxygenase; part of the gene cluster that mediates the biosynthesis of eupenifeldin, a bistropolone meroterpenoid that acts as an antitumor agent. The first step of eupenifeldin biosynthesis is the biosynthesis of 3-methylorcinaldehyde performed by the non-reducing polyketide synthase eupA. Oxidative dearomatization of 3-methylorcinaldehyde likely catalyzed by the FAD-dependent monooxygenase eupB is followed by oxidative ring expansion by the 2-oxoglutarate-dependent dioxygenase eupC to provide the first tropolone metabolite, tropolone stipitaldehyde. In parallel, generation of sesquiterpene alpha-humulene from farnesylpyrophosphate (FPP) is catalyzed by the terpene cyclase eupE. The cytochrome P450 monooxygenase eupD then hydroxylates humulene to humulenol. The putative Diels-Alderase eupF probably catalyzes the formation of the tropolone-humulene skeleton by linking humulenol and the polyketide moiety. The short-chain dehydrogenase/reductase eupG and the flavin-dependent monooxygenase eupH are also essential for eupenifeldin biosynthesis and are likely the additional decorating enzymes of the tropolone-humulene skeleton to produce final eupenifeldin or derivatives. The polypeptide is Cytochrome P450 monooxygenase eupD (Phoma sp).